The sequence spans 291 residues: HTH-type transcriptional activator AmpR (291 aa).

The HTH lysR-type domain occupies 6-63; that stretch reads IPLNSLRAFEAAARHLSFTRAAIELNVTHSAISQHVKSLEQQLNCQLFVRGSRGLMLT. The segment at residues 23–42 is a DNA-binding region (H-T-H motif); that stretch reads FTRAAIELNVTHSAISQHVK.

Belongs to the LysR transcriptional regulatory family.

The protein resides in the cytoplasm. Functionally, regulates the expression of the beta-lactamase gene. Represses cephalosporinase (AmpC) in the presence of beta-lactams and induces it in the absence of them. This Citrobacter freundii protein is HTH-type transcriptional activator AmpR (ampR).